A 103-amino-acid polypeptide reads, in one-letter code: Large ribosomal subunit protein bL21 (103 aa).

It belongs to the bacterial ribosomal protein bL21 family. In terms of assembly, part of the 50S ribosomal subunit. Contacts protein L20.

Functionally, this protein binds to 23S rRNA in the presence of protein L20. This chain is Large ribosomal subunit protein bL21, found in Haemophilus influenzae (strain ATCC 51907 / DSM 11121 / KW20 / Rd).